The following is a 134-amino-acid chain: uncharacterized protein (134 aa).

A signal peptide spans 1–16 (MAKAVALLLAAIAASA).

This is an uncharacterized protein from Oryza sativa subsp. indica (Rice).